Consider the following 286-residue polypeptide: Glucose import system permease protein GlcT (286 aa).

6 helical membrane passes run 6-26 (TIILVAPTAIFSAILLYLVIW), 71-91 (VILVVIGNILGIFIAALLYFL), 103-123 (IVIYPLSISMAVNGLIWLWLF), 154-174 (LVLVSVWAYTGIAALFYLAGF), 199-219 (ILIPNSLNSFIIATALLFLFS), and 260-280 (VATMITLIATIIIIPYALTVI). The 213-residue stretch at 63-275 (LLHSIELSVI…LIATIIIIPY (213 aa)) folds into the ABC transmembrane type-1 domain.

The protein belongs to the binding-protein-dependent transport system permease family. In terms of assembly, the complex is composed of two ATP-binding proteins (GlcV), two transmembrane proteins (GlcT and GlcU) and a solute-binding protein (GlcS).

The protein localises to the cell membrane. Its function is as follows. Part of the ABC transporter complex GlcSTUV involved in glucose uptake. Responsible for the translocation of the substrate across the membrane. The sequence is that of Glucose import system permease protein GlcT from Saccharolobus solfataricus (strain ATCC 35092 / DSM 1617 / JCM 11322 / P2) (Sulfolobus solfataricus).